The sequence spans 150 residues: Large ribosomal subunit protein bL9 (150 aa).

The protein belongs to the bacterial ribosomal protein bL9 family.

Binds to the 23S rRNA. In Moorella thermoacetica (strain ATCC 39073 / JCM 9320), this protein is Large ribosomal subunit protein bL9.